A 634-amino-acid chain; its full sequence is Ankyrin repeat protein OPG025 (634 aa).

6 ANK repeats span residues 36–69 (DGETPLKAYVTKKNNNIKNDVVILLLSSVDYKNI), 70–100 (NDFDIFEYLCSDNIDIDLLKLLISKGIEINS), 103–134 (NGINIVEKYATTSNPNVDVFKLLLDKGIPTCS), 175–211 (MGKTVLYYYIITRSQDGYATSLDVINYLISHKKEMRY), 307–337 (IQDLLLEYVSYHTVYINVIKCMIDEGATLYR), and 412–441 (HGCSILYHCIKSHSVSLVEWLIDNGADINI).

The protein belongs to the orthopoxvirus OPG025 family. As to quaternary structure, interacts with components of host SCF complex CUL1 and SKP1 and components of the cullin deneddylation/COP9 signalosome complex subunits COPS7A and COPS7B.

Its function is as follows. Plays a role in the inhibition of host immune repsonse by counteracting the action of interferons on early events in the viral replication cycle. The polypeptide is Ankyrin repeat protein OPG025 (OPG035) (Vaccinia virus (strain Western Reserve) (VACV)).